A 244-amino-acid chain; its full sequence is Troponin I, cardiac muscle (244 aa).

The span at 1 to 25 (MSDEEEVTYEEEEEEYVEEEEEEVV) shows a compositional bias: acidic residues. The tract at residues 1 to 67 (MSDEEEVTYE…PQVKRKPKIS (67 aa)) is disordered. N-acetylserine is present on S2. The residue at position 2 (S2) is a Phosphoserine; by CK2. Residues 27–42 (PEPPKPAPPPAAPPPL) are compositionally biased toward pro residues.

Belongs to the troponin I family. Binds to actin and tropomyosin. As to expression, heart.

Troponin I is the inhibitory subunit of troponin, the thin filament regulatory complex which confers calcium-sensitivity to striated muscle actomyosin ATPase activity. In Xenopus laevis (African clawed frog), this protein is Troponin I, cardiac muscle (tnni3).